Here is a 315-residue protein sequence, read N- to C-terminus: Methionine import ATP-binding protein MetN (315 aa).

In terms of domain architecture, ABC transporter spans 2–219 (IEIEKVCVDF…PQHAFTQQLV (218 aa)). 16–23 (GTSGAGKS) lines the ATP pocket.

Belongs to the ABC transporter superfamily. Methionine importer (TC 3.A.1.24) family. As to quaternary structure, the complex is composed of two ATP-binding proteins (MetN), two transmembrane proteins (MetI) and a solute-binding protein (MetQ).

It is found in the cell inner membrane. It carries out the reaction L-methionine(out) + ATP + H2O = L-methionine(in) + ADP + phosphate + H(+). The catalysed reaction is D-methionine(out) + ATP + H2O = D-methionine(in) + ADP + phosphate + H(+). Functionally, part of the ABC transporter complex MetNIQ involved in methionine import. Responsible for energy coupling to the transport system. This is Methionine import ATP-binding protein MetN from Salmonella enteritidis.